A 7388-amino-acid chain; its full sequence is Microtubule-actin cross-linking factor 1, isoforms 1/2/3/4/5 (7388 aa).

The segment at 1 to 47 (MSSSDEETLSERSCRSERSCRSERSYRSERSGSLSPCPPGDTLPWNL) is disordered. Positions 1 to 295 (MSSSDEETLS…VITYVSSIYD (295 aa)) are actin-binding. At Ser4 the chain carries Phosphoserine. Over residues 9-30 (LSERSCRSERSCRSERSYRSER) the composition is skewed to basic and acidic residues. 2 positions are modified to phosphoserine: Ser35 and Ser57. Calponin-homology (CH) domains follow at residues 78–181 (RVQK…LHFQ) and 194–298 (MSAK…DAFP). LRR repeat units follow at residues 148–171 (QRQV…LTLG) and 240–264 (LVDM…VAER). Phosphoserine is present on Ser280. 2 LRR repeats span residues 377-399 (LYKL…YHPN) and 441-464 (LNCE…LESG). Ser814 is modified (phosphoserine). The SH3 domain maps to 868-925 (KNTISVKAVCDYRQIEITICKNDECVLEDNSQRTKWKVISPTGNEAMVPSVCFLIPPP). The stretch at 1050–1073 (ISELKNIRLRLEEYEQRVVKRIQS) is one LRR 5 repeat. Ser1122 carries the post-translational modification Phosphoserine. 3 LRR repeats span residues 1128–1154 (VPTL…VYLN), 1187–1210 (LADL…VKDK), and 1257–1282 (HRVI…DYRA). Phosphoserine is present on residues Ser1367 and Ser1376. 5 Plectin repeats span residues 1577–1621 (LVLL…RELQ), 1654–1696 (LKIL…VLES), 1769–1809 (RLLE…CAIL), 1811–1848 (RQLQ…VILE), and 1855–1886 (GLLW…KILS). A phosphoserine mark is found at Ser2006 and Ser2051. Residues 2051 to 2085 (SQNKEYPDREDCTTEKGKKTTVETEDSSVENPEQD) are disordered. Basic and acidic residues predominate over residues 2055–2072 (EYPDREDCTTEKGKKTTV). A Phosphoserine modification is found at Ser2077. Plectin repeat units follow at residues 2290 to 2332 (LNVL…KLME), 2367 to 2410 (NVLM…LERQ), 2411 to 2437 (VVTG…GLVD), 2501 to 2543 (RLLT…LKRV), 2581 to 2612 (EVQA…LTNE), and 2686 to 2730 (LKVL…ASHQ). 2 disordered regions span residues 3013–3034 (EHDS…GKEA) and 3104–3174 (SEPF…NECK). A compositionally biased stretch (basic and acidic residues) spans 3115-3124 (EGLHYQESDG). Ser3122 is modified (phosphoserine). Residues 3129–3158 (TGPSQISKTDKSFQGTTRQETNYQDSWVTS) are compositionally biased toward polar residues. LRR repeat units lie at residues 3239–3262 (LTGE…SIED) and 3264–3283 (VTQR…LFKG). A compositionally biased stretch (basic and acidic residues) spans 3321-3332 (EKTPQEKLRESP). Positions 3321-3350 (EKTPQEKLRESPGSEQTPFMTAPEGKGNGG) are disordered. A Phosphoserine modification is found at Ser3331. LRR repeat units follow at residues 3646-3669 (QQDL…IQNR) and 3696-3720 (LTAL…TRVA). 2 Spectrin repeats span residues 3883–3957 (ELQK…NSFK) and 4000–4108 (QYHQ…SLLQ). Ser3927 is modified (phosphoserine). The stretch at 3936–3958 (KGDLRFVTISGQKVLDMENSFKE) is one LRR 13 repeat. LRR repeat units follow at residues 4125 to 4150 (LQSI…VIQE) and 4261 to 4287 (IQEL…ELSS). One copy of the Spectrin 3 repeat lies at 4466–4574 (RMEEVHKEAN…TVARQRQLEE (109 aa)). Phosphoserine occurs at positions 4495, 4496, and 4521. 3 LRR repeats span residues 4511-4534 (KAFL…LAGL), 4601-4624 (GVLG…QFML), and 4769-4792 (KKRL…RINR). Spectrin repeat units lie at residues 4800-4904 (TQQF…SRLK) and 4909-5012 (KAQK…SLEE). Residues Ser4836 and Ser4962 each carry the phosphoserine modification. 3 LRR repeats span residues 5051 to 5076 (NKNL…YLRN), 5172 to 5194 (NKIH…MLEE), and 5281 to 5304 (KEQV…LIQS). Spectrin repeat units follow at residues 5236–5341 (EDFY…QLQE), 5348–5450 (KFQD…QLED), and 5455–5557 (AKQF…LRTL). The residue at position 5435 (Thr5435) is a Phosphothreonine. A disordered region spans residues 5583-5603 (EELATSGGQSPTGEQIPQFQQ). Polar residues predominate over residues 5588-5603 (SGGQSPTGEQIPQFQQ). 2 LRR repeats span residues 5695 to 5719 (MALG…AFSI) and 5804 to 5828 (AQLP…QLRE). Spectrin repeat units lie at residues 5783-5885 (NQFW…ALDE), 6005-6110 (LAEK…KLED), 6115-6219 (AVQY…HKLE), 6225-6328 (LGQF…QQLQ), 6333-6439 (QAQG…KLEE), 6443-6547 (LATE…RSLD), 6552-6658 (RAKQ…KLEE), 6665-6766 (QFMD…RLEQ), and 6771-6874 (AEVF…QRLE). Residues Ser5808 and Ser6032 each carry the phosphoserine modification. Lys6210 carries the N6-acetyllysine modification. One copy of the LRR 24 repeat lies at 6496 to 6519 (RDQIIELDQTGNQLKFLSQKQDVV). Residues 6951–6981 (PTHAPFIEKSRSGGRKSLSQPTPPPMPILSQ) form a disordered region. A Phosphoserine modification is found at Ser6967. 2 consecutive EF-hand domains span residues 7041 to 7076 (HKKS…SKFP) and 7077 to 7112 (TTKL…NKDA). 10 residues coordinate Ca(2+): Asp7054, Asp7056, Asp7058, Lys7060, Glu7065, Asp7090, Asp7092, Asp7094, Tyr7096, and Glu7101. Positions 7117-7189 (TDADKIEDEV…EFLVKNDPCR (73 aa)) constitute a GAR domain. A C-terminal tail region spans residues 7117–7388 (TDADKIEDEV…ASPRTPGPKR (272 aa)). The segment at 7205–7388 (PEGASQGMTP…ASPRTPGPKR (184 aa)) is disordered. The segment covering 7225–7259 (SSRAASPTRSSSSASQSNHSCTSMPSSPATPASGT) has biased composition (low complexity). Phosphothreonine is present on Thr7254. Residues 7275–7299 (TFHSSRTSLAGDTSNSSSPASTGAK) show a composition bias toward polar residues. 2 positions are modified to phosphoserine: Ser7279 and Ser7292. The segment covering 7310-7324 (SRPGSRAGSRAGSRA) has biased composition (low complexity). The 4 X 4 AA tandem repeats of [GS]-S-R-[AR] stretch occupies residues 7313-7328 (GSRAGSRAGSRASSRR). A phosphoserine mark is found at Ser7330 and Ser7333. The span at 7339–7361 (ETQSACSDTSESSAAGGQGNSRR) shows a compositional bias: polar residues.

This sequence belongs to the plakin or cytolinker family. As to quaternary structure, isoform 2: Interacts with MAPRE1, CLASP1, CLASP2, AXIN1 and LRP6. Isoform 2: Found in a complex composed of MACF1, APC, AXIN1, CTNNB1 and GSK3B. Isoform 2: Interacts with GOLGA4. Isoform 2: Interacts with CAMSAP3. Phosphorylated on serine residues in the C-terminal tail by GSK3B. Phosphorylation inhibits microtubule-binding and this plays a critical role in bulge stem cell migration and skin wound repair. Wnt-signaling can repress phosphorylation. In terms of tissue distribution, isoform 2: Ubiquitously expressed. Isoform 1: Expressed in cell lines NCI-H460, A-549 and HaCaT. Isoform 4: Expressed in heart, lung, pituitary and placenta, not found in brain, kidney, liver, pancreas or skeletal muscle.

Its subcellular location is the cytoplasm. It localises to the cytoskeleton. The protein localises to the golgi apparatus. The protein resides in the cell membrane. It is found in the cell projection. Its subcellular location is the ruffle membrane. F-actin-binding protein which plays a role in cross-linking actin to other cytoskeletal proteins and also binds to microtubules. Plays an important role in ERBB2-dependent stabilization of microtubules at the cell cortex. Acts as a positive regulator of Wnt receptor signaling pathway and is involved in the translocation of AXIN1 and its associated complex (composed of APC, CTNNB1 and GSK3B) from the cytoplasm to the cell membrane. Has actin-regulated ATPase activity and is essential for controlling focal adhesions (FAs) assembly and dynamics. Interaction with CAMSAP3 at the minus ends of non-centrosomal microtubules tethers microtubules minus-ends to actin filaments, regulating focal adhesion size and cell migration. May play role in delivery of transport vesicles containing GPI-linked proteins from the trans-Golgi network through its interaction with GOLGA4. Plays a key role in wound healing and epidermal cell migration. Required for efficient upward migration of bulge cells in response to wounding and this function is primarily rooted in its ability to coordinate microtubule dynamics and polarize hair follicle stem cells. As a regulator of actin and microtubule arrangement and stabilization, it plays an essential role in neurite outgrowth, branching and spine formation during brain development. The chain is Microtubule-actin cross-linking factor 1, isoforms 1/2/3/4/5 from Homo sapiens (Human).